A 31-amino-acid polypeptide reads, in one-letter code: GVIPCGESCVFIPCISTLLGCSCKNKVCYRN.

The segment at residues 1–31 (GVIPCGESCVFIPCISTLLGCSCKNKVCYRN) is a cross-link (cyclopeptide (Gly-Asn)). Intrachain disulfides connect C5–C21, C9–C23, and C14–C28.

This is a cyclic peptide.

Probably participates in a plant defense mechanism. Has antibiotic activity. Inhibits the cytopathic effects and replication of the human immunodeficiency virus. Active against both Gram-positive and Gram-negative bacteria. This is Circulin-B from Chassalia parviflora.